We begin with the raw amino-acid sequence, 556 residues long: Hydroxylamine reductase (556 aa).

Residues cysteine 4, cysteine 7, cysteine 19, and cysteine 26 each coordinate [4Fe-4S] cluster. Hybrid [4Fe-2O-2S] cluster-binding residues include histidine 252, glutamate 276, cysteine 320, cysteine 407, cysteine 435, cysteine 460, glutamate 494, and lysine 496. Cysteine persulfide is present on cysteine 407.

It belongs to the HCP family. It depends on [4Fe-4S] cluster as a cofactor. Requires hybrid [4Fe-2O-2S] cluster as cofactor.

Its subcellular location is the cytoplasm. The catalysed reaction is A + NH4(+) + H2O = hydroxylamine + AH2 + H(+). Functionally, catalyzes the reduction of hydroxylamine to form NH(3) and H(2)O. The sequence is that of Hydroxylamine reductase from Acidithiobacillus ferridurans.